A 381-amino-acid polypeptide reads, in one-letter code: MAAPVLRCVRKLLKLVDFTPVPRRYRYKKKWATTEPQFTASRLALQNFDMTYSVQFGDLWPSIRVSLLSEQKYGALVNNFAAWDSVSAKLEQLSAKDFVSEAISHQKLEPESGLSPTPSLDCSPNLRCFTFSRGDVSRFPPARLGSLGLMDYYLMDAASLLPVLALGLQHGDTVLDLCAAPGGKTLALLQTGCCRNLAANDLSTSRTGRLQKVLHSYVPQDIREGNQVRVTSWDGRKWGELEGDTYDRVLVDVPCTTDRHSLHEEENNIFQRSRKKERQMLPMLQVQLLAAGLLATKPGGHVVYSTCSLSHLQNEYVVQGAIELLANQYNIKVQVEDLSHFRKLFMDTFCFFPSCQVGELVIPNLMVNFGPMYFCKLHRLP.

The N-terminal 25 residues, 1–25 (MAAPVLRCVRKLLKLVDFTPVPRRY), are a transit peptide targeting the mitochondrion. Residues Gly-182, Gly-183, Lys-184, and Asp-201 each coordinate S-adenosyl-L-methionine. Phosphoserine is present on Ser-203. Residues Arg-206, Asp-234, Gly-235, and Asp-252 each contribute to the S-adenosyl-L-methionine site. The active-site Nucleophile is the Cys-307.

Belongs to the class I-like SAM-binding methyltransferase superfamily. RsmB/NOP family. In terms of assembly, heterodimer with MTERFD2/MTERF4; this interaction seems to be required for NSUN4 recruitment to the mitochondrial large ribosomal subunit.

It is found in the mitochondrion. The enzyme catalyses a cytidine in rRNA + S-adenosyl-L-methionine = a 5-methylcytidine in rRNA + S-adenosyl-L-homocysteine + H(+). It carries out the reaction a cytidine in mRNA + S-adenosyl-L-methionine = a 5-methylcytidine in mRNA + S-adenosyl-L-homocysteine + H(+). Its function is as follows. Mitochondrial RNA cytosine C(5)-methyltransferase that methylates cytosine to 5-methylcytosine (m5C) in various RNAs, such as rRNAs, mRNAs and some long non-coding RNAs (lncRNAs). Involved in mitochondrial ribosome small subunit (SSU) maturation by catalyzing methylation of mitochondrial 12S rRNA; the function is independent of MTERFD2/MTERF4 and assembled mitochondrial ribosome large subunit (LSU). Targeted to LSU by MTERFD2/MTERF4 and probably is involved in a final step in ribosome biogenesis to ensure that SSU and LSU are assembled. In vitro can methylate 16S rRNA of the LSU; the methylation is enhanced by MTERFD/MTERF4. Also acts as a regulator of innate immunity by marking double-stranded mitochondrial RNAs(mt-dsRNAs) generated in response to stress: catalyzes m5C modification on mitochondrial RNAs, such as a mRNAs and lncRNAs, with a preference for the termini of light-strand lncRNAs, promoting their degradation and cytosolic release. Modified light-strand lncRNAs are then recognized by C1QBP reader and recruited to the mitochondrial degradosome complex, which promotes their degradation. The protein is 5-cytosine rRNA methyltransferase NSUN4 of Mus musculus (Mouse).